A 194-amino-acid polypeptide reads, in one-letter code: Calcium channel flower (194 aa).

The next 3 membrane-spanning stretches (helical) occupy residues 35 to 55 (LGIV…FSII), 66 to 88 (IIQM…VCFE), and 107 to 127 (GLYI…ASLF).

This sequence belongs to the calcium channel flower family. In terms of assembly, homomultimer. Associates with the dally/ magu complex.

It is found in the cell membrane. The protein localises to the cytoplasmic vesicle. The protein resides in the secretory vesicle. Its subcellular location is the synaptic vesicle membrane. It localises to the presynaptic cell membrane. It is found in the endosome. With respect to regulation, channel activity is inhibited by La(3+), which reduces Ca(2+) influx and thus inhibits it's function in promoting activity-dependent bulk endocytosis (ADBE) in response to high stimuli. Functionally, transmembrane protein which mediates synaptic endocytosis, fitness-based cell culling, neuronal culling, morphogen gradient scaling, and calcium transport. Regulates synaptic endocytosis and hence couples exo- with endocytosis. Controls two major modes of synaptic vesicle (SV) endocytosis in the synaptic boutons of neuromuscular junctions (NMJs); Ca(2+) channel-independent Clathrin-mediated endocytosis (CME) in response to mild stimulation, and Ca(2+) channel-dependent activity-dependent bulk endocytosis (ADBE) in response to strong stimulation. Functions in ADBE and subsequent SV reformation from bulk endosomes by initiating Ca(2+) channel-dependent phosphatidylinositol 4,5-bisphosphate (PtdIns(4,5)P2) compartmentalization in synaptic boutons. There it acts at the periactive zone to provide the low Ca(2+) levels required to initiate Calcineurin activation and upregulate PtdIns(4,5)P2. Conversely PtdIns(4,5)P2 enhances fwe Ca(2+) channel-activity, establishing a positive feedback loop that induces PtdIns(4,5)P2 microdomain at the periactive zone. These microdomains trigger bulk membrane invagination (i.e. ADBE) by triggering actin polymerization while also promoting localization of fwe to bulk endosomes, thereby removing the ADBE trigger to reduce endocytosis and prevent excess membrane uptake. PtdIns(4,5)P2 then promotes SV reformation from the bulk endosomes, to coordinate ADBE and subsequent SV reformation. Different combinations of the flower isoforms at the cell membrane are also required for the identification and elimination of suboptimal or supernumerary cells during development, regeneration, and adulthood. Required for the recognition and elimination of unfit cells in the developing wing during cell competition. In the developing pupal retina, mediates the elimination of unwanted postmitotic neurons, including supernumerary photoreceptor neurons that form at the periphery of the retina and are contained within incomplete ommatidia units. Also required for efficient elimination and replacement of old neurons by newly generated neurons during regeneration in the adult brain following mechanical injury. Downstream of the flower fitness fingerprints, cells identified as unwanted or unfit are eliminated via apoptosis through the expression of ahuizotl (azot). However, the cells marked for elimination by the flower isoforms only undergo apoptosis if additional thresholds are met; (1) their neighboring fit/healthy cells express different levels of the fwe isoforms, and (2) the levels of the protective signal SPARC expressed by the loser or unwanted cells are unable to inhibit caspase activation. These additional thresholds for flower-mediated apoptosis, allows useful cells to recover from transient and limited stress before they are unnecessarily eliminated. Functions with dally and magu in a mechanism of scaling, which utilises apoptosis to ensure that the dpp morphogen gradient, which mediates organ growth, remains proportional to the size of the growing wing. In this mechanism, fwe represses dally- and Magu-dependent activity in expanding the gradient, and dally/Magu inhibits fwe-dependent apoptosis to keep cell death rate low. When the levels of these different proteins are optimally regulated the gradient correctly scales with organ growth but when this fails, fwe-mediated apoptosis is activated to trim the developing tissue to match the correct size of the gradient. This Drosophila sechellia (Fruit fly) protein is Calcium channel flower.